We begin with the raw amino-acid sequence, 330 residues long: Phosphate acyltransferase (330 aa).

This sequence belongs to the PlsX family. Homodimer. Probably interacts with PlsY.

It localises to the cytoplasm. It catalyses the reaction a fatty acyl-[ACP] + phosphate = an acyl phosphate + holo-[ACP]. It participates in lipid metabolism; phospholipid metabolism. In terms of biological role, catalyzes the reversible formation of acyl-phosphate (acyl-PO(4)) from acyl-[acyl-carrier-protein] (acyl-ACP). This enzyme utilizes acyl-ACP as fatty acyl donor, but not acyl-CoA. This Bacillus cereus (strain AH820) protein is Phosphate acyltransferase.